Here is a 433-residue protein sequence, read N- to C-terminus: Serine--tRNA ligase (433 aa).

L-serine is bound at residue 235-237 (TSE). Residue 266–268 (RSE) coordinates ATP. Position 289 (Glu289) interacts with L-serine. 353–356 (EISS) serves as a coordination point for ATP. Ser388 contributes to the L-serine binding site.

This sequence belongs to the class-II aminoacyl-tRNA synthetase family. Type-1 seryl-tRNA synthetase subfamily. In terms of assembly, homodimer. The tRNA molecule binds across the dimer.

The protein resides in the cytoplasm. It catalyses the reaction tRNA(Ser) + L-serine + ATP = L-seryl-tRNA(Ser) + AMP + diphosphate + H(+). The enzyme catalyses tRNA(Sec) + L-serine + ATP = L-seryl-tRNA(Sec) + AMP + diphosphate + H(+). The protein operates within aminoacyl-tRNA biosynthesis; selenocysteinyl-tRNA(Sec) biosynthesis; L-seryl-tRNA(Sec) from L-serine and tRNA(Sec): step 1/1. Its function is as follows. Catalyzes the attachment of serine to tRNA(Ser). Is also able to aminoacylate tRNA(Sec) with serine, to form the misacylated tRNA L-seryl-tRNA(Sec), which will be further converted into selenocysteinyl-tRNA(Sec). The protein is Serine--tRNA ligase of Burkholderia orbicola (strain MC0-3).